A 300-amino-acid polypeptide reads, in one-letter code: Vetispiradiene synthase 2 (300 aa).

Mg(2+) contacts are provided by D54, D58, D197, T201, and E205. A DDXXD motif motif is present at residues 54 to 58 (DDTFD).

Belongs to the terpene synthase family. Tpsa subfamily. Requires Mg(2+) as cofactor.

The protein resides in the cytoplasm. The enzyme catalyses (2E,6E)-farnesyl diphosphate = (-)-vetispiradiene + diphosphate. It functions in the pathway secondary metabolite biosynthesis; terpenoid biosynthesis. In terms of biological role, sesquiterpene synthase that catalyzes the formation of vetispiradiene from trans,trans-farnesyl diphosphate. The initial internal cyclization produces the monocyclic intermediate germacrene A. The polypeptide is Vetispiradiene synthase 2 (Hyoscyamus muticus (Egyptian henbane)).